A 247-amino-acid polypeptide reads, in one-letter code: Carboxy-S-adenosyl-L-methionine synthase (247 aa).

Residues tyrosine 40, 65 to 67 (GAS), 90 to 91 (DN), 122 to 123 (DI), asparagine 137, and arginine 204 each bind S-adenosyl-L-methionine.

It belongs to the class I-like SAM-binding methyltransferase superfamily. Cx-SAM synthase family. In terms of assembly, homodimer.

It catalyses the reaction prephenate + S-adenosyl-L-methionine = carboxy-S-adenosyl-L-methionine + 3-phenylpyruvate + H2O. Its function is as follows. Catalyzes the conversion of S-adenosyl-L-methionine (SAM) to carboxy-S-adenosyl-L-methionine (Cx-SAM). The polypeptide is Carboxy-S-adenosyl-L-methionine synthase (Pseudomonas entomophila (strain L48)).